Here is a 789-residue protein sequence, read N- to C-terminus: Probable phosphoketolase (789 aa).

The protein belongs to the XFP family. Thiamine diphosphate is required as a cofactor.

The sequence is that of Probable phosphoketolase from Brucella abortus (strain 2308).